The sequence spans 200 residues: Probable molybdenum cofactor guanylyltransferase (200 aa).

GTP is bound by residues 9 to 11, lysine 21, aspartate 69, and aspartate 100; that span reads LAG. Aspartate 100 contributes to the Mg(2+) binding site.

This sequence belongs to the MobA family. It depends on Mg(2+) as a cofactor.

It localises to the cytoplasm. It catalyses the reaction Mo-molybdopterin + GTP + H(+) = Mo-molybdopterin guanine dinucleotide + diphosphate. In terms of biological role, transfers a GMP moiety from GTP to Mo-molybdopterin (Mo-MPT) cofactor (Moco or molybdenum cofactor) to form Mo-molybdopterin guanine dinucleotide (Mo-MGD) cofactor. In Bacillus cereus (strain ZK / E33L), this protein is Probable molybdenum cofactor guanylyltransferase.